The primary structure comprises 176 residues: Large ribosomal subunit protein uL16 (176 aa).

This sequence belongs to the universal ribosomal protein uL16 family.

The polypeptide is Large ribosomal subunit protein uL16 (Thermoplasma volcanium (strain ATCC 51530 / DSM 4299 / JCM 9571 / NBRC 15438 / GSS1)).